Here is a 684-residue protein sequence, read N- to C-terminus: 77 kDa membrane protein (684 aa).

The signal sequence occupies residues 1 to 30 (MKFKSLITTTLALGVLASTGANFNNNEASA). 6 MAP repeats span residues 45-154 (GYSK…EDKK), 156-265 (DKAN…ENKA), 266-374 (KRNY…KADR), 375-474 (YVPY…TGTK), 475-584 (AKAD…KKNN), and 586-684 (SNNV…ELKF).

It is found in the cell membrane. Its function is as follows. Binds various plasma and ECM-proteins. The polypeptide is 77 kDa membrane protein (Staphylococcus aureus (strain COL)).